The primary structure comprises 155 residues: SsrA-binding protein (155 aa).

It belongs to the SmpB family.

It localises to the cytoplasm. Functionally, required for rescue of stalled ribosomes mediated by trans-translation. Binds to transfer-messenger RNA (tmRNA), required for stable association of tmRNA with ribosomes. tmRNA and SmpB together mimic tRNA shape, replacing the anticodon stem-loop with SmpB. tmRNA is encoded by the ssrA gene; the 2 termini fold to resemble tRNA(Ala) and it encodes a 'tag peptide', a short internal open reading frame. During trans-translation Ala-aminoacylated tmRNA acts like a tRNA, entering the A-site of stalled ribosomes, displacing the stalled mRNA. The ribosome then switches to translate the ORF on the tmRNA; the nascent peptide is terminated with the 'tag peptide' encoded by the tmRNA and targeted for degradation. The ribosome is freed to recommence translation, which seems to be the essential function of trans-translation. The polypeptide is SsrA-binding protein (Bacillus cereus (strain B4264)).